A 216-amino-acid polypeptide reads, in one-letter code: MRIGILGGTFNPIHNAHLRIAEEVRDRLDLERVMFVPAASPPHKLLAGELSFEVRYEMVRLAIADNPFFTISDIEGKRGGTSYSIHTLQELHLAYPADEFFFIIGSDSFLDIGSWKEYAAIFNLCNIVVVSRPGAVADPLDKALPVAIADRFCYHAAEKRLTHSSGHSVYSIAGTLLDISSSEIRTLTRQGRSIRYLLPATVEQYIKEQRIYNDGR.

The protein belongs to the NadD family.

The catalysed reaction is nicotinate beta-D-ribonucleotide + ATP + H(+) = deamido-NAD(+) + diphosphate. It functions in the pathway cofactor biosynthesis; NAD(+) biosynthesis; deamido-NAD(+) from nicotinate D-ribonucleotide: step 1/1. Functionally, catalyzes the reversible adenylation of nicotinate mononucleotide (NaMN) to nicotinic acid adenine dinucleotide (NaAD). The polypeptide is Probable nicotinate-nucleotide adenylyltransferase (Geotalea daltonii (strain DSM 22248 / JCM 15807 / FRC-32) (Geobacter daltonii)).